We begin with the raw amino-acid sequence, 188 residues long: Cell division protein SepF (188 aa).

The interval 29 to 53 is disordered; that stretch reads EQQDQDQRATQADGGALATLGDSNP.

The protein belongs to the SepF family. As to quaternary structure, homodimer. Interacts with FtsZ.

It is found in the cytoplasm. Functionally, cell division protein that is part of the divisome complex and is recruited early to the Z-ring. Probably stimulates Z-ring formation, perhaps through the cross-linking of FtsZ protofilaments. Its function overlaps with FtsA. This is Cell division protein SepF from Synechococcus sp. (strain CC9902).